Reading from the N-terminus, the 343-residue chain is Proto-oncogene serine/threonine-protein kinase mos (343 aa).

Residues 63-339 form the Protein kinase domain; sequence VCLMHRLGSG…LLQRDLKAFR (277 aa). Residues 69–77 and lysine 90 each bind ATP; that span reads LGSGGFGSV. Aspartate 198 functions as the Proton acceptor in the catalytic mechanism.

Belongs to the protein kinase superfamily. Ser/Thr protein kinase family. In terms of assembly, interacts with MAP2K1/MEK1.

It localises to the cytoplasm. It catalyses the reaction L-seryl-[protein] + ATP = O-phospho-L-seryl-[protein] + ADP + H(+). It carries out the reaction L-threonyl-[protein] + ATP = O-phospho-L-threonyl-[protein] + ADP + H(+). Serine/threonine kinase involved in the regulation of MAPK signaling. Is an activator of the ERK1/2 signaling cascade playing an essential role in the stimulation of oocyte maturation. In Mus musculus (Mouse), this protein is Proto-oncogene serine/threonine-protein kinase mos.